The following is a 156-amino-acid chain: Single-stranded DNA-binding protein 1 (156 aa).

The 107-residue stretch at 1-107 folds into the SSB domain; it reads MNETMICAVG…IDAVAIGHDL (107 aa). The segment covering 114–124 has biased composition (low complexity); sequence FRRTARTEAST. Residues 114–156 are disordered; the sequence is FRRTARTEASTSPPRPEPNWEVPAGGTPGEPVPEQRPDPVPVG.

As to quaternary structure, homotetramer.

The sequence is that of Single-stranded DNA-binding protein 1 (ssb1) from Streptomyces coelicolor (strain ATCC BAA-471 / A3(2) / M145).